A 733-amino-acid polypeptide reads, in one-letter code: MIGEKDLAGDGECSRTKTSKPRFSNLNNQTHQDDKTGQYHQKGVDFLNVRSNNLDGGFSSKSSPRSGNELTLSYLCENSGKLAESLGQKGKEVVTFSENSSYDDKWVERDFFNLREMNPNSSKRKAHEEEEEAEEEEDKKSNKIETLNLSLALPDVSLSLTASNAVKRPRVVTSERTTTSFSNDFTATAPSMSYSYSHPFSHNISCSMTRNSTDFDCSVGKDDHIWCAGEGTNGSVHSRFRPIGDGGVALANNPVSGKPSSSADYSFFPSELPARPGNEVTISGDSRKKVANLEDNDAVRSERVLYDIVSKSISSVALIIQGMADETLESAKEYLRNLIDSPEKKEKLVNLQNQIDKRSDLSKETLSKCVKDQLDILVAVRTGLKYFLSGKIRIPMNELVEIFLFLRCRNVNCKSLLPVDDCECKICSNNKGFCSSCMCPVCLRFDSASNTCSWVGCDVCSHWCHAACGIQKNLIKPGHSLKGQRGTTEMMFHCIGCAHKSEMFGFVKDVFVCCAKNWGLETLIKELDCVRKVFRGSDDAKGKALHLKANEMVKKLESKQISPLDASNFIIQFFNYAESIPEIPDPPRELTVAAETSYRKDEASVTPSTSKDQKKKSFALTDAMMNSFDSLESMVRIKEAETRMFQKKADEARIEAESFKRMIEMKTEKMEEEYTEKLARLCLQETEERRRNKLEELKKLENSHCDYRNMKLRMEAEIAGLLKRMEVTRQQLV.

A compositionally biased stretch (basic and acidic residues) spans 1-15; it reads MIGEKDLAGDGECSR. Disordered regions lie at residues 1–42 and 118–142; these read MIGE…YHQK and NPNSSKRKAHEEEEEAEEEEDKKSN. Positions 21–30 are enriched in polar residues; it reads PRFSNLNNQT. A coiled-coil region spans residues 120–153; sequence NSSKRKAHEEEEEAEEEEDKKSNKIETLNLSLAL. The segment at 436–500 adopts a PHD-type zinc-finger fold; the sequence is SCMCPVCLRF…MFHCIGCAHK (65 aa). Residues 592–614 are disordered; sequence VAAETSYRKDEASVTPSTSKDQK. Positions 644 to 733 form a coiled coil; the sequence is MFQKKADEAR…RMEVTRQQLV (90 aa).

In terms of assembly, self-interacts. Interacts with OBE1 and OBE2. Interacts with OBE4.

It localises to the nucleus. In terms of biological role, probable transcription factor that functions redundantly with OBE4 in specification of the hypophysis and establishment of the embryonic root. Involved in the activation of ARF5/MP-dependent gene expression during embryonic root meristem initiation. Involved in shoot meristem homeostasis. This Arabidopsis thaliana (Mouse-ear cress) protein is Protein OBERON 3.